Reading from the N-terminus, the 282-residue chain is 4-hydroxy-3-methylbut-2-enyl diphosphate reductase (282 aa).

Cysteine 14 lines the [4Fe-4S] cluster pocket. (2E)-4-hydroxy-3-methylbut-2-enyl diphosphate-binding residues include histidine 43 and histidine 78. Histidine 43 and histidine 78 together coordinate dimethylallyl diphosphate. Isopentenyl diphosphate is bound by residues histidine 43 and histidine 78. Residue cysteine 100 coordinates [4Fe-4S] cluster. Histidine 128 provides a ligand contact to (2E)-4-hydroxy-3-methylbut-2-enyl diphosphate. Residue histidine 128 coordinates dimethylallyl diphosphate. Histidine 128 provides a ligand contact to isopentenyl diphosphate. Glutamate 130 (proton donor) is an active-site residue. Threonine 164 provides a ligand contact to (2E)-4-hydroxy-3-methylbut-2-enyl diphosphate. Cysteine 192 provides a ligand contact to [4Fe-4S] cluster. (2E)-4-hydroxy-3-methylbut-2-enyl diphosphate-binding residues include serine 220, serine 221, asparagine 222, and serine 266. The dimethylallyl diphosphate site is built by serine 220, serine 221, asparagine 222, and serine 266. The isopentenyl diphosphate site is built by serine 220, serine 221, asparagine 222, and serine 266.

Belongs to the IspH family. Requires [4Fe-4S] cluster as cofactor.

It carries out the reaction isopentenyl diphosphate + 2 oxidized [2Fe-2S]-[ferredoxin] + H2O = (2E)-4-hydroxy-3-methylbut-2-enyl diphosphate + 2 reduced [2Fe-2S]-[ferredoxin] + 2 H(+). The enzyme catalyses dimethylallyl diphosphate + 2 oxidized [2Fe-2S]-[ferredoxin] + H2O = (2E)-4-hydroxy-3-methylbut-2-enyl diphosphate + 2 reduced [2Fe-2S]-[ferredoxin] + 2 H(+). Its pathway is isoprenoid biosynthesis; dimethylallyl diphosphate biosynthesis; dimethylallyl diphosphate from (2E)-4-hydroxy-3-methylbutenyl diphosphate: step 1/1. The protein operates within isoprenoid biosynthesis; isopentenyl diphosphate biosynthesis via DXP pathway; isopentenyl diphosphate from 1-deoxy-D-xylulose 5-phosphate: step 6/6. Its function is as follows. Catalyzes the conversion of 1-hydroxy-2-methyl-2-(E)-butenyl 4-diphosphate (HMBPP) into a mixture of isopentenyl diphosphate (IPP) and dimethylallyl diphosphate (DMAPP). Acts in the terminal step of the DOXP/MEP pathway for isoprenoid precursor biosynthesis. The sequence is that of 4-hydroxy-3-methylbut-2-enyl diphosphate reductase from Clostridium perfringens (strain 13 / Type A).